The primary structure comprises 629 residues: tRNA uridine 5-carboxymethylaminomethyl modification enzyme MnmG (629 aa).

FAD-binding positions include 13-18 (GGGHAG), Val125, and Ser180. 273–287 (GPRYCPSIEDKVMRF) contacts NAD(+). Gln370 contacts FAD.

This sequence belongs to the MnmG family. In terms of assembly, homodimer. Heterotetramer of two MnmE and two MnmG subunits. It depends on FAD as a cofactor.

The protein resides in the cytoplasm. Functionally, NAD-binding protein involved in the addition of a carboxymethylaminomethyl (cmnm) group at the wobble position (U34) of certain tRNAs, forming tRNA-cmnm(5)s(2)U34. The chain is tRNA uridine 5-carboxymethylaminomethyl modification enzyme MnmG from Salmonella paratyphi A (strain ATCC 9150 / SARB42).